The following is a 230-amino-acid chain: All-trans retinoic acid-induced differentiation factor (230 aa).

The signal sequence occupies residues 1–26 (MTANVTVSSMYLFTVLLLLFNVYVNS). Over 27-200 (QDTDAQLCQM…YKCMRQGEFP (174 aa)) the chain is Extracellular. Positions 152–194 (QKNACNQTVQMPLVCPENSLCSPYGPGFFECSCLNNFHGYKCM) constitute an EGF-like domain. 3 disulfides stabilise this stretch: cysteine 156-cysteine 172, cysteine 166-cysteine 182, and cysteine 184-cysteine 193. A helical membrane pass occupies residues 201-221 (LVKVLGILTASTVVVSSVLWF). At 222 to 230 (TQRRKVKNT) the chain is on the cytoplasmic side.

The protein resides in the nucleus envelope. It is found in the cell membrane. Its subcellular location is the lysosome membrane. In terms of biological role, involved in osteoblast cell differentiation. May play a role in inducing the cell cycle arrest. The sequence is that of All-trans retinoic acid-induced differentiation factor (atraid) from Danio rerio (Zebrafish).